Reading from the N-terminus, the 300-residue chain is Geranylgeranyl pyrophosphate synthase (300 aa).

Position 1 is an N-acetylmethionine (Met1). Residues Lys25, Arg28, and His57 each contribute to the isopentenyl diphosphate site. Mg(2+) contacts are provided by Asp64 and Asp68. Residue Arg73 coordinates dimethylallyl diphosphate. Position 74 (Arg74) interacts with isopentenyl diphosphate. Residues Lys151, Thr152, Gln185, Lys202, and Lys212 each coordinate dimethylallyl diphosphate.

The protein belongs to the FPP/GGPP synthase family. As to quaternary structure, homohexamer; trimer of homodimers. The cofactor is Mg(2+). Abundantly expressed in testis. Found in other tissues to a lower extent. Expressed in dermal fibroblast and skeletal muscle.

Its subcellular location is the cytoplasm. The protein resides in the perinuclear region. It localises to the myofibril. The protein localises to the sarcomere. It is found in the z line. It carries out the reaction isopentenyl diphosphate + dimethylallyl diphosphate = (2E)-geranyl diphosphate + diphosphate. The catalysed reaction is isopentenyl diphosphate + (2E)-geranyl diphosphate = (2E,6E)-farnesyl diphosphate + diphosphate. The enzyme catalyses isopentenyl diphosphate + (2E,6E)-farnesyl diphosphate = (2E,6E,10E)-geranylgeranyl diphosphate + diphosphate. Its pathway is isoprenoid biosynthesis; farnesyl diphosphate biosynthesis; farnesyl diphosphate from geranyl diphosphate and isopentenyl diphosphate: step 1/1. It functions in the pathway isoprenoid biosynthesis; geranyl diphosphate biosynthesis; geranyl diphosphate from dimethylallyl diphosphate and isopentenyl diphosphate: step 1/1. The protein operates within isoprenoid biosynthesis; geranylgeranyl diphosphate biosynthesis; geranylgeranyl diphosphate from farnesyl diphosphate and isopentenyl diphosphate: step 1/1. Subject to product inhibition by geranylgeranyl diphosphate. Catalyzes the trans-addition of the three molecules of IPP onto DMAPP to form geranylgeranyl pyrophosphate, an important precursor of carotenoids and geranylated proteins. This Homo sapiens (Human) protein is Geranylgeranyl pyrophosphate synthase (GGPS1).